The following is a 319-amino-acid chain: Cobalamin biosynthesis protein CbiB (319 aa).

Helical transmembrane passes span 52 to 74 (IGGG…GVLA), 79 to 101 (IHPW…GRSL), 155 to 177 (GIIA…YKAV), 207 to 229 (YLPA…LSGW), and 296 to 318 (LMWV…LSGV).

The protein belongs to the CobD/CbiB family.

Its subcellular location is the cell membrane. It functions in the pathway cofactor biosynthesis; adenosylcobalamin biosynthesis; adenosylcobalamin from cob(II)yrinate a,c-diamide: step 4/7. Its function is as follows. Converts cobyric acid to cobinamide by the addition of aminopropanol on the F carboxylic group. However, the true cosubstrate could be (R)-1-amino-2-propanol O-2-phosphate, leading to cobinamide phosphate. In Salmonella typhi, this protein is Cobalamin biosynthesis protein CbiB.